We begin with the raw amino-acid sequence, 117 residues long: Large ribosomal subunit protein bL19 (117 aa).

The protein belongs to the bacterial ribosomal protein bL19 family.

This protein is located at the 30S-50S ribosomal subunit interface and may play a role in the structure and function of the aminoacyl-tRNA binding site. This is Large ribosomal subunit protein bL19 from Blochmanniella floridana.